Consider the following 185-residue polypeptide: Peptide deformylase (185 aa).

Fe cation contacts are provided by Cys109 and His152. Residue Glu153 is part of the active site. Residue His156 participates in Fe cation binding.

This sequence belongs to the polypeptide deformylase family. Requires Fe(2+) as cofactor.

It catalyses the reaction N-terminal N-formyl-L-methionyl-[peptide] + H2O = N-terminal L-methionyl-[peptide] + formate. In terms of biological role, removes the formyl group from the N-terminal Met of newly synthesized proteins. Requires at least a dipeptide for an efficient rate of reaction. N-terminal L-methionine is a prerequisite for activity but the enzyme has broad specificity at other positions. The sequence is that of Peptide deformylase from Roseiflexus castenholzii (strain DSM 13941 / HLO8).